The chain runs to 496 residues: Cyclin-L1 (496 aa).

2 cyclin-like regions span residues 68 to 170 (ELIQ…RILK) and 183 to 267 (KIIV…TTLR). Residues 301-496 (NPDGTPAILS…SHSGHGRHRR (196 aa)) form a disordered region. Residues 322 to 347 (SPRDVKTEEKSPNFAKVKREMDDKQS) show a composition bias toward basic and acidic residues. Basic residues-rich tracts occupy residues 358–392 (ENKRSRSVSRSRSRTKSRSRSHSPRRHYNNRRRSR), 412–426 (RRHHNHGSPHMKLKH), 434–446 (RHAHKRKKSHSPS), and 456–468 (KKHRHEHGHHRER). Positions 363-406 (RSVSRSRSRTKSRSRSHSPRRHYNNRRRSRSGTYSSRSRSRSRS) are RS. Positions 469–478 (RERSRSFERS) are enriched in basic and acidic residues. Residues 479–496 (HKNKHHGSSHSGHGRHRR) are compositionally biased toward basic residues.

Belongs to the cyclin family. Cyclin L subfamily.

The protein resides in the nucleus speckle. It localises to the nucleus. Its subcellular location is the nucleoplasm. Involved in pre-mRNA splicing. The chain is Cyclin-L1 (ccnl1) from Xenopus laevis (African clawed frog).